Reading from the N-terminus, the 80-residue chain is Nuclear protein 1 (80 aa).

2 disordered regions span residues 1 to 21 and 38 to 80; these read MATL…EDED and VGGG…KAWR. Positions 61-80 are enriched in basic and acidic residues; the sequence is GHERKLLTKFQNSERKKAWR. The Nuclear localization signal motif lies at 64–80; sequence RKLLTKFQNSERKKAWR.

It belongs to the NUPR family. Monomer. Directly interacts with MSL1 and binds MORF4L1, two components of histone acetyltransferase complex; the interaction with MORF4L1 may be mediated by MSL1. Interacts with EP300; this interaction enhances the effect of EP300 on PAX2 transcription factor activity. Interacts with PAXIP1; this interaction prevents PAXIP1 inhibition of PAX2 transcription factor activity. Interacts with COPS5; this interaction allows COPS5-dependent CDKN1B nuclear to cytoplasm translocation. Interacts with RNF2. Interacts with FOXO3; this interaction represses FOXO3 transactivation. Interacts with PTMA; regulates apoptotic process. Interacts with MYOD1, EP300 and DDX5; this interaction coordinates the association of anti-proliferative and pro-myogenic proteins at the myogenin promoter. Interacts with TP53; interaction is stress-dependent. Forms a complex with EP300 and TP53; this complex binds CDKN1A promoter leading to transcriptional induction of CDKN1A. In terms of processing, phosphorylated. Phosphorylation promotes DNA-binding activity. Acetylated. Highly expressed in pancreas and both ovaries and testes.

The protein resides in the nucleus. It is found in the cytoplasm. Its subcellular location is the perinuclear region. In terms of biological role, transcription regulator that converts stress signals into a program of gene expression that empowers cells with resistance to the stress induced by a change in their microenvironment. Thereby participates in the regulation of many processes namely cell-cycle, apoptosis, autophagy and DNA repair responses. Controls cell cycle progression and protects cells from genotoxic stress induced by doxorubicin through the complex formation with TP53 and EP300 that binds CDKN1A promoter leading to transcriptional induction of CDKN1A. Protects pancreatic cancer cells from stress-induced cell death by binding the RELB promoter and activating its transcription, leading to IER3 transactivation. Negatively regulates apoptosis through interaction with PTMA. Inhibits autophagy-induced apoptosis in cardiac cells through FOXO3 interaction, inducing cytoplasmic translocation of FOXO3 thereby preventing the FOXO3 association with the pro-autophagic BNIP3 promoter. Inhibits cell growth and facilitates programmed cell death by apoptosis after adriamycin-induced DNA damage through transactivation of TP53. Regulates methamphetamine-induced apoptosis and autophagy through DDIT3-mediated endoplasmic reticulum stress pathway. Participates in DNA repair following gamma-irradiation by facilitating DNA access of the transcription machinery through interaction with MSL1 leading to inhibition of histone H4' Lys-16' acetylation (H4K16ac). Coactivator of PAX2 transcription factor activity, both by recruiting the EP300 cofactor to increase PAX2 transcription factor activity and by binding PAXIP1 to suppress PAXIP1-induced inhibition on PAX2. Positively regulates cell cycle progression through interaction with COPS5 inducing cytoplasmic translocation of CDKN1B leading to the CDKN1B degradation. Coordinates, through its interaction with EP300, the assiociation of MYOD1, EP300 and DDX5 to the MYOG promoter, leading to inhibition of cell-cycle progression and myogenic differentiation promotion. Negatively regulates beta cell proliferation via inhibition of cell-cycle regulatory genes expression through the suppression of their promoter activities. Also required for LHB expression and ovarian maturation. Exacerbates CNS inflammation and demyelination upon cuprizone treatment. The chain is Nuclear protein 1 from Mus musculus (Mouse).